Reading from the N-terminus, the 421-residue chain is Replication factor C large subunit (421 aa).

Residue 63 to 70 coordinates ATP; sequence GPPGIGKT.

This sequence belongs to the activator 1 small subunits family. RfcL subfamily. In terms of assembly, heteromultimer composed of small subunits (RfcS) and large subunits (RfcL).

In terms of biological role, part of the RFC clamp loader complex which loads the PCNA sliding clamp onto DNA. This Pyrobaculum calidifontis (strain DSM 21063 / JCM 11548 / VA1) protein is Replication factor C large subunit.